We begin with the raw amino-acid sequence, 403 residues long: Guanine nucleotide-binding protein alpha-8 subunit (403 aa).

Gly2 carries the N-myristoyl glycine lipid modification. Cys3 carries the S-palmitoyl cysteine lipid modification. Positions 31-356 (LDFRILLLGA…KVLMKATKDL (326 aa)) constitute a G-alpha domain. The tract at residues 34-47 (RILLLGAGESGKST) is G1 motif. Residues 39-46 (GAGESGKS), 174-180 (IMTRVRT), 199-203 (DVGGQ), 268-271 (NKKD), and Ala324 each bind GTP. Mg(2+) is bound by residues Ser46 and Thr180. Positions 172–180 (DCIMTRVRT) are G2 motif. The interval 195–204 (FRVVDVGGQR) is G3 motif. Residues 264–271 (FLVLNKKD) form a G4 motif region. The segment at 322–327 (IAARYK) is G5 motif. Residues 353–403 (TKDLKKSSKQSSKSSLGNSTQNNSNNNNNNNNSNNNNGQTTIDGATAKINS) are disordered. The segment covering 374–389 (NNSNNNNNNNNSNNNN) has biased composition (low complexity). Residues 390–403 (GQTTIDGATAKINS) are compositionally biased toward polar residues.

This sequence belongs to the G-alpha family. In terms of assembly, g proteins are composed of 3 units; alpha, beta and gamma. The alpha chain contains the guanine nucleotide binding site.

In terms of biological role, guanine nucleotide-binding proteins (G proteins) are involved as modulators or transducers in various transmembrane signaling systems. G alpha-8 is a potential analog for the G(s)-like G-proteins which stimulate adenylate cyclase in mammals. The protein is Guanine nucleotide-binding protein alpha-8 subunit (gpaH) of Dictyostelium discoideum (Social amoeba).